Consider the following 522-residue polypeptide: MSQDLQKEVASRKTFAIISHPDAGKTTITEQLLLFGGVIRSAGTVKGKKSGKFATSDWMEIEKQRGISVTSSVMQFDYNGSRINILDTPGHSDFSEDTYRTLMAVDSAVMVIDAAKGIEAQTLKLFKVCRMRGIPIFTFINKMDRQGKMPLELLAELEEVLGIESYPMNWPIGMGKELAGIYDRYHRVIEQYRSEEDERFLPLGEDGDLKEVHAIQKSLYYDQALEEIMLLDEAGNDFSRERIIAGEQTPVFFGSALTNFGVETFLRTFVDFAPSPSSHESNEGVIEADNPKFSGFIFKIQANMNPAHRDRIAFIRICSGEFERGMNVTLTRTGKSMKLANSTQFMADDRETVNRAVAGDIIGLYDTGNYQIGDTITNGSKKLEFEKLPQFTPELFMRVYAKNVMKQKHFHKGVEQLVQEGAIQLFKTWRTEEYIIGAVGQLQFEVFEHRMRGEYNSEIRMEPIGKKIARWVKEEDADEKLSTARSMLVKDRFDQPLFLFENEFAINWFNDKNPDIELTSLL.

A tr-type G domain is found at Ala10–Ser277. GTP-binding positions include Ser19–Thr26, Asp87–His91, and Asn141–Asp144.

The protein belongs to the TRAFAC class translation factor GTPase superfamily. Classic translation factor GTPase family. PrfC subfamily.

It localises to the cytoplasm. Its function is as follows. Increases the formation of ribosomal termination complexes and stimulates activities of RF-1 and RF-2. It binds guanine nucleotides and has strong preference for UGA stop codons. It may interact directly with the ribosome. The stimulation of RF-1 and RF-2 is significantly reduced by GTP and GDP, but not by GMP. The polypeptide is Peptide chain release factor 3 (Listeria innocua serovar 6a (strain ATCC BAA-680 / CLIP 11262)).